A 46-amino-acid chain; its full sequence is Endochitinase 1A (46 aa).

It belongs to the glycosyl hydrolase 19 family. Chitinase class I subfamily.

It catalyses the reaction Random endo-hydrolysis of N-acetyl-beta-D-glucosaminide (1-&gt;4)-beta-linkages in chitin and chitodextrins.. Its function is as follows. Defense against chitin-containing fungal and bacterial pathogens. The protein is Endochitinase 1A of Arachis hypogaea (Peanut).